Reading from the N-terminus, the 808-residue chain is Phospholipase D alpha 1 (808 aa).

One can recognise a C2 domain in the interval 1-125 (MAHYLMHGTL…IRGDQVDRWV (125 aa)). Residue aspartate 186 coordinates Ca(2+). The PLD phosphodiesterase 1 domain occupies 326 to 364 (TMFTHHQKIVVVDGEMPSGESQMRRIVSFVGGIDLCDGR). Catalysis depends on residues histidine 331, lysine 333, and aspartate 338. Position 331 (histidine 331) interacts with a 1,2-diacyl-sn-glycero-3-phosphate. Positions 370 and 404 each coordinate Ca(2+). A 1,2-diacyl-sn-glycero-3-phosphate is bound by residues glutamine 520 and histidine 659. Residues 654-681 (FMIYVHTKMMIVDDEYIIVGSANINQRS) enclose the PLD phosphodiesterase 2 domain. Active-site residues include histidine 659, lysine 661, and aspartate 666. Glutamate 720 provides a ligand contact to Ca(2+).

Belongs to the phospholipase D family. C2-PLD subfamily. Ca(2+) serves as cofactor.

It carries out the reaction a 1,2-diacyl-sn-glycero-3-phosphocholine + H2O = a 1,2-diacyl-sn-glycero-3-phosphate + choline + H(+). Its function is as follows. Hydrolyzes glycerol-phospholipids at the terminal phosphodiesteric bond. Plays an important role in various cellular processes. In Carica papaya (Papaya), this protein is Phospholipase D alpha 1.